Consider the following 394-residue polypeptide: Tubulin-like protein CetZ4 (394 aa).

Residues Q10–K14, G110–G112, E142, N169, and N187 contribute to the GTP site.

This sequence belongs to the CetZ family.

It localises to the cytoplasm. In terms of biological role, involved in cell shape control. The protein is Tubulin-like protein CetZ4 of Haloferax volcanii (strain ATCC 29605 / DSM 3757 / JCM 8879 / NBRC 14742 / NCIMB 2012 / VKM B-1768 / DS2) (Halobacterium volcanii).